The sequence spans 314 residues: Homoserine O-succinyltransferase (314 aa).

Residue C142 is the Acyl-thioester intermediate of the active site. Substrate is bound by residues K163 and S192. H235 serves as the catalytic Proton acceptor. The active site involves E237. Substrate is bound at residue R249.

It belongs to the MetA family.

It localises to the cytoplasm. The enzyme catalyses L-homoserine + succinyl-CoA = O-succinyl-L-homoserine + CoA. It participates in amino-acid biosynthesis; L-methionine biosynthesis via de novo pathway; O-succinyl-L-homoserine from L-homoserine: step 1/1. Its function is as follows. Transfers a succinyl group from succinyl-CoA to L-homoserine, forming succinyl-L-homoserine. The protein is Homoserine O-succinyltransferase of Shewanella frigidimarina (strain NCIMB 400).